We begin with the raw amino-acid sequence, 28 residues long: Antibacterial protein LC3 (28 aa).

In terms of biological role, antibacterial activity against X.campestris, especially strain G, and P.solacearum PO1. In Bacillus subtilis, this protein is Antibacterial protein LC3.